Reading from the N-terminus, the 447-residue chain is NADH-quinone oxidoreductase subunit N (447 aa).

The next 13 helical transmembrane spans lie at 4–24 (FAALLPVILLGAGAVTAMLAA), 27–47 (LPGLARWIAGFALVAASVALA), 68–88 (LTGLVVCLSGIGSLAFLRPDG), 92–112 (EGPALLLLATLGGVVLTGAVH), 113–133 (AASLFLGLELITLALVALFVL), 146–166 (FLILGAAAAATLLMGLALGHA), 181–201 (ALLTFAAALLLAGLAFKLALV), 215–235 (PGAAAAFAGAASKVAVVTALV), 245–265 (VWALGLGTFAGVSILLGNLAA), 280–300 (VGHAGYIAAALATGAASAPAA), 302–322 (LFYIVTYAPALLAALCVAALI), 342–362 (GAAMAAALVSLAGLPVSAGFF), and 376–395 (AWALLALAIAGSALGAYYYL).

It belongs to the complex I subunit 2 family. In terms of assembly, NDH-1 is composed of 14 different subunits. Subunits NuoA, H, J, K, L, M, N constitute the membrane sector of the complex.

It localises to the cell inner membrane. The catalysed reaction is a quinone + NADH + 5 H(+)(in) = a quinol + NAD(+) + 4 H(+)(out). Its function is as follows. NDH-1 shuttles electrons from NADH, via FMN and iron-sulfur (Fe-S) centers, to quinones in the respiratory chain. The immediate electron acceptor for the enzyme in this species is believed to be ubiquinone. Couples the redox reaction to proton translocation (for every two electrons transferred, four hydrogen ions are translocated across the cytoplasmic membrane), and thus conserves the redox energy in a proton gradient. This Cereibacter sphaeroides (strain ATCC 17025 / ATH 2.4.3) (Rhodobacter sphaeroides) protein is NADH-quinone oxidoreductase subunit N.